The sequence spans 197 residues: Xanthine phosphoribosyltransferase (197 aa).

Residues L20 and T27 each coordinate xanthine. Position 128–132 (128–132 (ANGQA)) interacts with 5-phospho-alpha-D-ribose 1-diphosphate. K156 provides a ligand contact to xanthine.

The protein belongs to the purine/pyrimidine phosphoribosyltransferase family. Xpt subfamily. Homodimer.

It localises to the cytoplasm. The catalysed reaction is XMP + diphosphate = xanthine + 5-phospho-alpha-D-ribose 1-diphosphate. It participates in purine metabolism; XMP biosynthesis via salvage pathway; XMP from xanthine: step 1/1. Converts the preformed base xanthine, a product of nucleic acid breakdown, to xanthosine 5'-monophosphate (XMP), so it can be reused for RNA or DNA synthesis. This is Xanthine phosphoribosyltransferase from Lactococcus lactis subsp. lactis (strain IL1403) (Streptococcus lactis).